A 78-amino-acid polypeptide reads, in one-letter code: Large ribosomal subunit protein bL28 (78 aa).

The protein belongs to the bacterial ribosomal protein bL28 family.

The chain is Large ribosomal subunit protein bL28 from Nostoc sp. (strain PCC 7120 / SAG 25.82 / UTEX 2576).